The following is a 423-amino-acid chain: Glucose-1-phosphate adenylyltransferase (423 aa).

Alpha-D-glucose 1-phosphate contacts are provided by residues Tyr110, Gly175, 190–191 (EK), and Ser208.

This sequence belongs to the bacterial/plant glucose-1-phosphate adenylyltransferase family. In terms of assembly, homotetramer.

The catalysed reaction is alpha-D-glucose 1-phosphate + ATP + H(+) = ADP-alpha-D-glucose + diphosphate. It participates in glycan biosynthesis; glycogen biosynthesis. Involved in the biosynthesis of ADP-glucose, a building block required for the elongation reactions to produce glycogen. Catalyzes the reaction between ATP and alpha-D-glucose 1-phosphate (G1P) to produce pyrophosphate and ADP-Glc. The chain is Glucose-1-phosphate adenylyltransferase from Nitrosococcus oceani (strain ATCC 19707 / BCRC 17464 / JCM 30415 / NCIMB 11848 / C-107).